Reading from the N-terminus, the 175-residue chain is Protein tyrosine phosphatase PRL-1 (175 aa).

Residues 15-172 enclose the Tyrosine-protein phosphatase domain; that stretch reads KPSRVLFHFL…YKRRHQGAGC (158 aa). C53 and C114 form a disulfide bridge. Catalysis depends on D76, which acts as the Proton donor. C114 (phosphocysteine intermediate) is an active-site residue. 116-120 provides a ligand contact to substrate; that stretch reads AGLGR. C172 carries the post-translational modification Cysteine methyl ester. The S-farnesyl cysteine moiety is linked to residue C172. Positions 173 to 175 are cleaved as a propeptide — removed in mature form; the sequence is VIM.

It belongs to the protein-tyrosine phosphatase family.

It localises to the cytoplasm. The protein localises to the mitochondrion matrix. The protein resides in the kinetoplast. It is found in the secreted. Its subcellular location is the extracellular exosome. It catalyses the reaction O-phospho-L-tyrosyl-[protein] + H2O = L-tyrosyl-[protein] + phosphate. Activated in a reduced environment which promotes the reduction of the disulfide bond between the regulatory Cys-53 and catalytic Cys-114 residues. Functionally, has protein tyrosine phosphatase activity and may act as a virulence factor to support intracellular survival in host macrophages. The protein is Protein tyrosine phosphatase PRL-1 of Leishmania major.